Reading from the N-terminus, the 214-residue chain is tRNA (guanine-N(7)-)-methyltransferase (214 aa).

Positions 44, 69, 96, and 118 each coordinate S-adenosyl-L-methionine. Asp-118 is an active-site residue. Residues Lys-122, Asp-154, and 191–194 contribute to the substrate site; that span reads TEYE.

Belongs to the class I-like SAM-binding methyltransferase superfamily. TrmB family.

It catalyses the reaction guanosine(46) in tRNA + S-adenosyl-L-methionine = N(7)-methylguanosine(46) in tRNA + S-adenosyl-L-homocysteine. The protein operates within tRNA modification; N(7)-methylguanine-tRNA biosynthesis. Functionally, catalyzes the formation of N(7)-methylguanine at position 46 (m7G46) in tRNA. This is tRNA (guanine-N(7)-)-methyltransferase from Listeria innocua serovar 6a (strain ATCC BAA-680 / CLIP 11262).